A 77-amino-acid chain; its full sequence is Sec-independent protein translocase protein TatA 2 (77 aa).

Residues 2–22 traverse the membrane as a helical segment; it reads FPGGISMTELIIILAVILLLF. Residues 52 to 77 form a disordered region; the sequence is KEVKAEDVKTEERKEEKKEEKEKVEA.

It belongs to the TatA/E family. As to quaternary structure, forms a complex with TatC.

It is found in the cell inner membrane. Part of the twin-arginine translocation (Tat) system that transports large folded proteins containing a characteristic twin-arginine motif in their signal peptide across membranes. TatA could form the protein-conducting channel of the Tat system. In Aquifex aeolicus (strain VF5), this protein is Sec-independent protein translocase protein TatA 2.